Consider the following 317-residue polypeptide: E3 ubiquitin-protein ligase NRDP1 (317 aa).

The RING-type; degenerate zinc-finger motif lies at 18-57; the sequence is CPICSGVLEEPVQAPHCEHAFCNACITQWFSQQQTCPVDR. Residues 78–138 form an SIAH-type; degenerate zinc finger; that stretch reads KLQIACDNAV…LPNHNCIKHL (61 aa).

In terms of assembly, interacts with USP8, ERBB3, PRKN and BIRC6. Interacts with CSF2RB, EPOR, IL3RA, MYD88 and TBK1. Interacts with Clec16a. Post-translationally, autoubiquitinated. Autoubiquitination leads to proteasomal degradation. Deubiquitinated by USP8 to get stabilized which induces apoptosis.

It catalyses the reaction S-ubiquitinyl-[E2 ubiquitin-conjugating enzyme]-L-cysteine + [acceptor protein]-L-lysine = [E2 ubiquitin-conjugating enzyme]-L-cysteine + N(6)-ubiquitinyl-[acceptor protein]-L-lysine.. It functions in the pathway protein modification; protein ubiquitination. In terms of biological role, acts as E3 ubiquitin-protein ligase and regulates the degradation of target proteins. Polyubiquitinates MYD88. Negatively regulates MYD88-dependent production of pro-inflammatory cytokines. Can promote TRIF-dependent production of type I interferon and inhibits infection with vesicular stomatitis virus. Also promotes activation of TBK1 and IRF3. Involved in the ubiquitination of erythropoietin (EPO) and interleukin-3 (IL-3) receptors. Thus, through maintaining basal levels of cytokine receptors, RNF41 is involved in the control of hematopoietic progenitor cell differentiation into myeloerythroid lineages. Contributes to the maintenance of steady-state ERBB3 levels by mediating its growth factor-independent degradation. Involved in the degradation of the inhibitor of apoptosis BIRC6 and thus is an important regulator of cell death by promoting apoptosis. Also acts as a PRKN modifier that accelerates its degradation, resulting in a reduction of PRKN activity, influencing the balance of intracellular redox state. The RNF41-PRKN pathway regulates autophagosome-lysosome fusion during late mitophagy. Mitophagy is a selective form of autophagy necessary for mitochondrial quality control. The sequence is that of E3 ubiquitin-protein ligase NRDP1 (Rnf41) from Mus musculus (Mouse).